The sequence spans 294 residues: Acetylglutamate kinase (294 aa).

Substrate contacts are provided by residues Gly47 to Gly48, Arg69, and Asn168.

It belongs to the acetylglutamate kinase family. ArgB subfamily.

Its subcellular location is the cytoplasm. The catalysed reaction is N-acetyl-L-glutamate + ATP = N-acetyl-L-glutamyl 5-phosphate + ADP. Its pathway is amino-acid biosynthesis; L-arginine biosynthesis; N(2)-acetyl-L-ornithine from L-glutamate: step 2/4. Its function is as follows. Catalyzes the ATP-dependent phosphorylation of N-acetyl-L-glutamate. This Corynebacterium glutamicum (strain ATCC 13032 / DSM 20300 / JCM 1318 / BCRC 11384 / CCUG 27702 / LMG 3730 / NBRC 12168 / NCIMB 10025 / NRRL B-2784 / 534) protein is Acetylglutamate kinase.